The following is a 1514-amino-acid chain: Neuropathy target esterase sws (1514 aa).

Topologically, residues 1-34 are lumenal; it reads MDVLELLRASATGSYTALFSDAWCQYVSKQITNS. Residues 35 to 55 traverse the membrane as a helical segment; the sequence is MYLYCALGVLSMVFLAWFMYF. Residues 56-1514 lie on the Cytoplasmic side of the membrane; sequence KRLARIRLRD…KGGAYNETKN (1459 aa). Residue 175–302 coordinates a nucleoside 3',5'-cyclic phosphate; that stretch reads IFGHFEKPVF…IRVIQVIMIR (128 aa). Residues 337–352 are compositionally biased toward polar residues; the sequence is STHSSQCSRQTGSQPT. Residues 337–418 are disordered; it reads STHSSQCSRQ…NPNPDVINTS (82 aa). Residues 356–374 show a composition bias toward low complexity; sequence PAPTCSNTTTTASPTTANT. Serine 457 is subject to Phosphoserine. A nucleoside 3',5'-cyclic phosphate is bound by residues 515-644 and 633-760; these read ELGL…VVRR and IVLD…LSHR. The 167-residue stretch at 987-1153 folds into the PNPLA domain; that stretch reads LVLGGGGARG…VNNLPGQLWR (167 aa). The GXGXXG motif lies at 991–996; sequence GGGARG. A GXSXG motif is present at residues 1018–1022; sequence GVSIG. The Nucleophile role is filled by serine 1020. The active-site Proton acceptor is the aspartate 1140. The DGA/G motif lies at 1140–1142; that stretch reads DGG. At serine 1234 the chain carries Phosphoserine. Positions 1409–1514 are disordered; sequence EKSIHSAATS…KGGAYNETKN (106 aa). Composition is skewed to basic and acidic residues over residues 1425–1449 and 1456–1470; these read RSRE…ETER and LDRK…KEPE. The span at 1471-1489 shows a compositional bias: acidic residues; that stretch reads QEQELETEEPNQENTEVEE.

Belongs to the NTE family. Interacts with Pka-C3; interaction inhibits the catalytic function of Pka-C3 and the esterase activity of sws.

Its subcellular location is the endoplasmic reticulum membrane. The catalysed reaction is a 1-acyl-sn-glycero-3-phosphocholine + H2O = sn-glycerol 3-phosphocholine + a fatty acid + H(+). Phospholipase B that deacylates intracellular phosphatidylcholine (PtdCho), generating glycerophosphocholine (GroPtdCho). This deacylation occurs at both sn-2 and sn-1 positions of PtdCho. Its specific chemical modification by certain organophosphorus (OP) compounds leads to distal axonopathy. Plays a role in the signaling mechanism between neurons and glia that regulates glia wrapping during development of the adult brain. Essential for membrane lipid homeostasis and cell survival in both neurons and glia of the adult brain. The sequence is that of Neuropathy target esterase sws from Drosophila ananassae (Fruit fly).